A 250-amino-acid polypeptide reads, in one-letter code: 3-deoxy-manno-octulosonate cytidylyltransferase (250 aa).

The protein belongs to the KdsB family.

The protein localises to the cytoplasm. It catalyses the reaction 3-deoxy-alpha-D-manno-oct-2-ulosonate + CTP = CMP-3-deoxy-beta-D-manno-octulosonate + diphosphate. The protein operates within nucleotide-sugar biosynthesis; CMP-3-deoxy-D-manno-octulosonate biosynthesis; CMP-3-deoxy-D-manno-octulosonate from 3-deoxy-D-manno-octulosonate and CTP: step 1/1. Its pathway is bacterial outer membrane biogenesis; lipopolysaccharide biosynthesis. Activates KDO (a required 8-carbon sugar) for incorporation into bacterial lipopolysaccharide in Gram-negative bacteria. This chain is 3-deoxy-manno-octulosonate cytidylyltransferase, found in Herminiimonas arsenicoxydans.